The sequence spans 467 residues: Serine/threonine-protein kinase SSN3 (467 aa).

Polar residues-rich tracts occupy residues 1 to 12 (MSFSNLPPSSGR) and 29 to 39 (GSSSFTANNPS). The interval 1-45 (MSFSNLPPSSGRGSHADGASGRSMPPFPGSSSFTANNPSKGIHPN) is disordered. Positions 79 to 408 (YLIVGFISSG…AKEALNHPYF (330 aa)) constitute a Protein kinase domain. ATP-binding positions include 85 to 93 (ISSGTYGRV) and lysine 109. Catalysis depends on aspartate 211, which acts as the Proton acceptor. The tract at residues 426-467 (YPNRRVSQDDNDIRSGSLPGTKRSGLPDDTLTSRAAKRAREM) is disordered.

This sequence belongs to the protein kinase superfamily. CMGC Ser/Thr protein kinase family. CDC2/CDKX subfamily. Component of the SRB8-11 complex, a regulatory module of the Mediator complex. The cofactor is Mg(2+).

It localises to the nucleus. The catalysed reaction is L-seryl-[protein] + ATP = O-phospho-L-seryl-[protein] + ADP + H(+). It catalyses the reaction L-threonyl-[protein] + ATP = O-phospho-L-threonyl-[protein] + ADP + H(+). It carries out the reaction [DNA-directed RNA polymerase] + ATP = phospho-[DNA-directed RNA polymerase] + ADP + H(+). Functionally, component of the SRB8-11 complex. The SRB8-11 complex is a regulatory module of the Mediator complex which is itself involved in regulation of basal and activated RNA polymerase II-dependent transcription. The SRB8-11 complex may be involved in the transcriptional repression of a subset of genes regulated by Mediator. It may inhibit the association of the Mediator complex with RNA polymerase II to form the holoenzyme complex. The SRB8-11 complex phosphorylates the C-terminal domain (CTD) of the largest subunit of RNA polymerase II. This chain is Serine/threonine-protein kinase SSN3 (SSN3), found in Coccidioides immitis (strain RS) (Valley fever fungus).